We begin with the raw amino-acid sequence, 223 residues long: Ribonuclease T (223 aa).

The Exonuclease domain occupies 20–194 (VVIDVETAGF…YDTERTAELF (175 aa)). Mg(2+) is bound by residues aspartate 23, glutamate 25, histidine 181, and aspartate 186. Histidine 181 functions as the Proton donor/acceptor in the catalytic mechanism.

It belongs to the RNase T family. As to quaternary structure, homodimer. Requires Mg(2+) as cofactor.

Its function is as follows. Trims short 3' overhangs of a variety of RNA species, leaving a one or two nucleotide 3' overhang. Responsible for the end-turnover of tRNA: specifically removes the terminal AMP residue from uncharged tRNA (tRNA-C-C-A). Also appears to be involved in tRNA biosynthesis. The chain is Ribonuclease T from Shewanella sp. (strain W3-18-1).